A 56-amino-acid chain; its full sequence is Large ribosomal subunit protein bL32 (56 aa).

The tract at residues methionine 1 to histidine 40 is disordered. Basic residues predominate over residues lysine 7–arginine 16. Residues serine 21–alanine 31 show a composition bias toward polar residues.

This sequence belongs to the bacterial ribosomal protein bL32 family.

In Shewanella halifaxensis (strain HAW-EB4), this protein is Large ribosomal subunit protein bL32.